A 924-amino-acid chain; its full sequence is MPGPSPGLRRALLGLWAALGLGLFGLSAVSQEPFWADLQPRVAFVERGGSLWLNCSTNCPRPERGGLETSLRRNGTQRGLRWLARQLVDIREPETQPVCFFRCARRTLQARGLIRTFQRPDRVELMPLPPWQPVGENFTLSCRVPGAGPRASLTLTLLRGAQELIRRSFAGEPPRARGAVLTATVLARREDHGANFSCRAELDLRPHGLGLFENSSAPRELRTFSLSPDAPRLAAPRLLEVGSERPVSCTLDGLFPASEARVYLALGDQNLSPDVTLEGDAFVATATATASAEQEGARQLVCNVTLGGENRETRENVTIYSFPAPLLTLSEPSVSEGQMVTVTCAAGAQALVTLEGVPAAVPGQPAQLQLNATENDDRRSFFCDATLDVDGETLIKNRSAELRVLYAPRLDDSDCPRSWTWPEGPEQTLRCEARGNPEPSVHCARSDGGAVLALGLLGPVTRALSGTYRCKAANDQGEAVKDVTLTVEYAPALDSVGCPERITWLEGTEASLSCVAHGVPPPDVICVRSGELGAVIEGLLRVAREHAGTYRCEATNPRGSAAKNVAVTVEYGPRFEEPSCPSNWTWVEGSGRLFSCEVDGKPQPSVKCVGSGGATEGVLLPLAPPDPSPRAPRIPRVLAPGIYVCNATNRHGSVAKTVVVSAESPPEMDESTCPSHQTWLEGAEASALACAARGRPSPGVRCSREGIPWPEQQRVSREDAGTYHCVATNAHGTDSRTVTVGVEYRPVVAELAASPPGGVRPGGNFTLTCRAEAWPPAQISWRAPPGALNIGLSSNNSTLSVAGAMGSHGGEYECAATNAHGRHARRITVRVAGPWLWVAVGGAAGGAALLAAGAGLAFYVQSTACKKGEYNVQEAESSGEAVCLNGAGGGAGGAAGAEGGPEAAGGAAESPAEGEVFAIQLTSA.

Positions 1–31 (MPGPSPGLRRALLGLWAALGLGLFGLSAVSQ) are cleaved as a signal peptide. Over 32 to 835 (EPFWADLQPR…RITVRVAGPW (804 aa)) the chain is Extracellular. Ig-like C2-type domains are found at residues 48 to 130 (GGSL…PLPP), 135 to 235 (GENF…RLAA), 242 to 329 (GSER…LLTL), 337 to 402 (GQMV…SAEL), 408 to 486 (PRLD…VTLT), 491 to 568 (PALD…VAVT), 573 to 662 (PRFE…VVSA), 666 to 739 (PEMD…RTVT), and 746 to 830 (PVVA…ITVR). N-linked (GlcNAc...) (high mannose) asparagine glycosylation occurs at asparagine 54. 2 disulfide bridges follow: cysteine 55–cysteine 99 and cysteine 59–cysteine 103. 2 N-linked (GlcNAc...) asparagine glycosylation sites follow: asparagine 74 and asparagine 137. An intrachain disulfide couples cysteine 142 to cysteine 198. Threonine 182 and threonine 184 each carry phosphothreonine. 2 N-linked (GlcNAc...) asparagine glycosylation sites follow: asparagine 195 and asparagine 214. A disulfide bridge links cysteine 249 with cysteine 302. 4 N-linked (GlcNAc...) asparagine glycosylation sites follow: asparagine 303, asparagine 316, asparagine 371, and asparagine 397. Cysteine 344 and cysteine 383 form a disulfide bridge. 3 cysteine pairs are disulfide-bonded: cysteine 415–cysteine 470, cysteine 498–cysteine 552, and cysteine 580–cysteine 645. Residues asparagine 583 and asparagine 646 are each glycosylated (N-linked (GlcNAc...) asparagine). Cysteines 673 and 725 form a disulfide. Asparagine 764, asparagine 795, and asparagine 796 each carry an N-linked (GlcNAc...) asparagine glycan. Cysteines 769 and 814 form a disulfide. A helical transmembrane segment spans residues 836-856 (LWVAVGGAAGGAALLAAGAGL). Residues 857 to 924 (AFYVQSTACK…EVFAIQLTSA (68 aa)) lie on the Cytoplasmic side of the membrane. Residues 891–903 (AGGAAGAEGGPEA) are compositionally biased toward gly residues. A disordered region spans residues 891–911 (AGGAAGAEGGPEAAGGAAESP).

The protein belongs to the immunoglobulin superfamily. ICAM family. Glycosylation at Asn-54 is critical for functional folding. In terms of tissue distribution, expressed on neurons in the most rostral segment of the mammalian brain, the telencephalon.

It is found in the membrane. Its function is as follows. ICAM proteins are ligands for the leukocyte adhesion protein LFA-1 (integrin alpha-L/beta-2). This chain is Intercellular adhesion molecule 5 (ICAM5), found in Homo sapiens (Human).